The chain runs to 313 residues: Formimidoylglutamase (313 aa).

Mn(2+) is bound by residues His-130, Asp-155, His-157, Asp-159, Asp-241, and Asp-243.

It belongs to the arginase family. Mn(2+) is required as a cofactor.

The enzyme catalyses N-formimidoyl-L-glutamate + H2O = formamide + L-glutamate. It functions in the pathway amino-acid degradation; L-histidine degradation into L-glutamate; L-glutamate from N-formimidoyl-L-glutamate (hydrolase route): step 1/1. In terms of biological role, catalyzes the conversion of N-formimidoyl-L-glutamate to L-glutamate and formamide. The protein is Formimidoylglutamase of Salmonella choleraesuis (strain SC-B67).